The chain runs to 177 residues: Bifunctional protein PyrR (177 aa).

Residues 101 to 113 carry the PRPP-binding motif; the sequence is IILIDDVLYTGRT.

This sequence belongs to the purine/pyrimidine phosphoribosyltransferase family. PyrR subfamily.

It catalyses the reaction UMP + diphosphate = 5-phospho-alpha-D-ribose 1-diphosphate + uracil. In terms of biological role, regulates the transcription of the pyrimidine nucleotide (pyr) operon in response to exogenous pyrimidines. Its function is as follows. Also displays a weak uracil phosphoribosyltransferase activity which is not physiologically significant. This Endomicrobium trichonymphae protein is Bifunctional protein PyrR.